The sequence spans 137 residues: Small ribosomal subunit protein uS12 (137 aa).

Asp89 carries the 3-methylthioaspartic acid modification. A disordered region spans residues 101–137; sequence SLDTSGVADRKQSRSKYGAKQPKAGAPAAPVKGKGKK. Residues 116 to 137 show a composition bias toward low complexity; it reads KYGAKQPKAGAPAAPVKGKGKK.

The protein belongs to the universal ribosomal protein uS12 family. Part of the 30S ribosomal subunit. Contacts proteins S8 and S17. May interact with IF1 in the 30S initiation complex.

Its function is as follows. With S4 and S5 plays an important role in translational accuracy. In terms of biological role, interacts with and stabilizes bases of the 16S rRNA that are involved in tRNA selection in the A site and with the mRNA backbone. Located at the interface of the 30S and 50S subunits, it traverses the body of the 30S subunit contacting proteins on the other side and probably holding the rRNA structure together. The combined cluster of proteins S8, S12 and S17 appears to hold together the shoulder and platform of the 30S subunit. The protein is Small ribosomal subunit protein uS12 of Chlorobium chlorochromatii (strain CaD3).